The sequence spans 240 residues: Myogenic factor 6 (240 aa).

Positions 91-142 constitute a bHLH domain; that stretch reads DRRKAATLRERRRLKKINEAFEALKRRTVANPNQRLPKVEILRSAINYIERL.

In terms of assembly, efficient DNA binding requires dimerization with another bHLH protein. As to expression, skeletal muscle.

The protein resides in the nucleus. Its function is as follows. Involved in muscle differentiation (myogenic factor). Induces fibroblasts to differentiate into myoblasts. Probable sequence specific DNA-binding protein. In Xenopus laevis (African clawed frog), this protein is Myogenic factor 6 (myf6).